The chain runs to 285 residues: N(G),N(G)-dimethylarginine dimethylaminohydrolase 1 (285 aa).

Ala-2 is subject to N-acetylalanine. Residue Leu-30 coordinates substrate. Ser-33 carries the post-translational modification Phosphoserine. The substrate site is built by Asp-73, Glu-78, Asp-79, Arg-98, and Arg-145. His-173 functions as the Proton donor in the catalytic mechanism. Position 222 is an S-nitrosocysteine (Cys-222). Substrate is bound at residue Val-268. S-nitrosocysteine is present on Cys-274. Cys-274 serves as the catalytic Nucleophile. Zn(2+) is bound at residue Cys-274.

The protein belongs to the DDAH family. Monomer. In terms of tissue distribution, detected in skeletal muscle, lung, heart, liver, kidney and brain (at protein level).

The catalysed reaction is N(omega),N(omega)-dimethyl-L-arginine + H2O = dimethylamine + L-citrulline. It carries out the reaction N(omega)-methyl-L-arginine + H2O = L-citrulline + methylamine. Inhibited by zinc ions. Its function is as follows. Hydrolyzes N(G),N(G)-dimethyl-L-arginine (ADMA) and N(G)-monomethyl-L-arginine (MMA) which act as inhibitors of NOS. Has therefore a role in the regulation of nitric oxide generation. The protein is N(G),N(G)-dimethylarginine dimethylaminohydrolase 1 (Ddah1) of Mus musculus (Mouse).